We begin with the raw amino-acid sequence, 339 residues long: Phenylalanine--tRNA ligase alpha subunit (339 aa).

Residue Glu254 participates in Mg(2+) binding.

The protein belongs to the class-II aminoacyl-tRNA synthetase family. Phe-tRNA synthetase alpha subunit type 1 subfamily. In terms of assembly, tetramer of two alpha and two beta subunits. Requires Mg(2+) as cofactor.

It is found in the cytoplasm. It catalyses the reaction tRNA(Phe) + L-phenylalanine + ATP = L-phenylalanyl-tRNA(Phe) + AMP + diphosphate + H(+). This chain is Phenylalanine--tRNA ligase alpha subunit, found in Clostridium perfringens (strain SM101 / Type A).